The sequence spans 320 residues: MSVGIIGAGQLAYALARGFTAAGIVSAHKIIASSPEMNLPTVSALRKMGVNLTRSNKETVKHSDVLFLAVKPHIIPFILDEIGADVQARHIVVSCAAGVTISSVEKKLMAFQPAPKVIRCMTNTPVVVREGATVYAMGTHALVEDGQLLEQLMSSVGFCTEVEEDLIDAVTGLSGSGPAYAFMALDALADGGVKMGLPRRLAVRLGAQALLGAAKMLLDSEQHPCQLKDNVCSPGGATIHALHFLESGGFRSLLINAVEASCIRTRELQSMADQEKISPAALKKTLLDRVKLESPTVSTLTPSSPGKLLTRSLALGGKKD.

Serine 2 bears the N-acetylserine mark. NADP(+)-binding positions include 6-11 (IGAGQL) and serine 34. NADPH is bound by residues alanine 8, glutamine 10, leucine 11, serine 34, glutamate 36, asparagine 56, valine 70, lysine 71, and alanine 97. NADP(+) contacts are provided by residues asparagine 56, 69–72 (AVKP), and 95–97 (CAA). Glutamate 164 is a binding site for L-proline. Asparagine 230 provides a ligand contact to NADPH. 2 residues coordinate L-proline: alanine 237 and threonine 238. Positions 295-305 (PTVSTLTPSSP) are enriched in low complexity. Residues 295–320 (PTVSTLTPSSPGKLLTRSLALGGKKD) are disordered. Serine 304 carries the post-translational modification Phosphoserine.

This sequence belongs to the pyrroline-5-carboxylate reductase family. Homodecamer; composed of 5 homodimers. Interacts with LTO1.

The protein localises to the cytoplasm. Its subcellular location is the mitochondrion. The enzyme catalyses L-proline + NADP(+) = (S)-1-pyrroline-5-carboxylate + NADPH + 2 H(+). It carries out the reaction L-proline + NAD(+) = (S)-1-pyrroline-5-carboxylate + NADH + 2 H(+). It participates in amino-acid biosynthesis; L-proline biosynthesis; L-proline from L-glutamate 5-semialdehyde: step 1/1. Its function is as follows. Oxidoreductase that catalyzes the last step in proline biosynthesis, which corresponds to the reduction of pyrroline-5-carboxylate to L-proline using NAD(P)H. At physiologic concentrations, has higher specific activity in the presence of NADH. Involved in cellular response to oxidative stress. In some cell types, such as erythrocytes, its primary function may be the generation of NADP(+). This Macaca fascicularis (Crab-eating macaque) protein is Pyrroline-5-carboxylate reductase 2 (PYCR2).